The primary structure comprises 663 residues: Probable methylenetetrahydrofolate reductase (NADPH) (663 aa).

The Proton donor/acceptor role is filled by Glu76. NAD(+) is bound by residues Glu76 to Arg81 and Thr107 to Trp108. At Thr107 the chain carries Phosphothreonine. Residues Thr107–Trp108, His141, Arg171–Asp173, Arg187–Ala188, Tyr210, His214–Ala217, Asp223, and Lys230 each bind FAD. A substrate-binding site is contributed by Asp173. Substrate is bound by residues Gln241, Tyr334, and Arg338. Ser408 is subject to Phosphoserine. Phosphothreonine is present on Thr465. S-adenosyl-L-methionine-binding positions include Gln477–Thr480, Thr497–Gln501, Thr578, and Thr591.

The protein belongs to the methylenetetrahydrofolate reductase family. The cofactor is FAD.

It catalyses the reaction (6S)-5-methyl-5,6,7,8-tetrahydrofolate + NADP(+) = (6R)-5,10-methylene-5,6,7,8-tetrahydrofolate + NADPH + H(+). Its pathway is one-carbon metabolism; tetrahydrofolate interconversion. The chain is Probable methylenetetrahydrofolate reductase (NADPH) from Caenorhabditis elegans.